The following is a 250-amino-acid chain: MKICLIDETGTGDGALSVLAARWGLEHDEDNLMALVLTPEHLELRKRDEPKLGGIFVDFVGGAMAHRRKFGGGRGEAVAKAVGIKGDYLPDVVDATAGLGRDAFVLASVGCRVRMLERNPVVAALLDDGLARGYADAEIGGWLQERLQLIHASSLTALTDITPRPQVVYLDPMFPHKQKSALVKKEMRVFQSLVGPDLDADGLLEPARLLATKRVVVKRPDYAPPLANVATPNAVVTKGHRFDIYAGTPV.

S-adenosyl-L-methionine is bound by residues 101–102, 117–118, 153–154, and Asp-171; these read RD, ER, and SS.

The protein belongs to the methyltransferase superfamily. RsmJ family.

It localises to the cytoplasm. The catalysed reaction is guanosine(1516) in 16S rRNA + S-adenosyl-L-methionine = N(2)-methylguanosine(1516) in 16S rRNA + S-adenosyl-L-homocysteine + H(+). Specifically methylates the guanosine in position 1516 of 16S rRNA. The sequence is that of Ribosomal RNA small subunit methyltransferase J from Escherichia coli (strain SMS-3-5 / SECEC).